Here is a 252-residue protein sequence, read N- to C-terminus: MTAPADKGKKAKTDADGGAAEENEQIDGALVLSIEKLQEIQDELEKVNEEASDKVLEVEQKYSEIRRPVYLRRSDIIQTIPDFWLTAFLSHPLLSELLTEEDQKMFKYLESVDVDDSKDVKSGYSITLTFSENPYFEDKELTKTYAFADDGTTTINATCIKWKEGMEIANGNAKKKGSKRPLVEESFFTWFTDTEHKSLADGVQDEVAEIIKEDLWPNPLKYFNNEAEELGEDDDEEGSDADEGEEDEEEEN.

A compositionally biased stretch (basic and acidic residues) spans 1–15; it reads MTAPADKGKKAKTDA. Positions 1 to 23 are disordered; the sequence is MTAPADKGKKAKTDADGGAAEEN. Residues 26-67 adopt a coiled-coil conformation; the sequence is IDGALVLSIEKLQEIQDELEKVNEEASDKVLEVEQKYSEIRR. A disordered region spans residues 222–252; sequence YFNNEAEELGEDDDEEGSDADEGEEDEEEEN. Residues 226-252 are compositionally biased toward acidic residues; it reads EAEELGEDDDEEGSDADEGEEDEEEEN.

The protein belongs to the nucleosome assembly protein (NAP) family.

The protein resides in the nucleus. It is found in the cytoplasm. In terms of biological role, acts as a histone H2A/H2B chaperone in nucleosome assembly. The sequence is that of NAP1-related protein 2 from Oryza sativa subsp. indica (Rice).